A 794-amino-acid chain; its full sequence is Ubiquitin carboxyl-terminal hydrolase 10 (794 aa).

N-acetylalanine is present on A2. The interaction with p53/TP53 stretch occupies residues 2 to 99 (ALHNPQYIFG…ILGCPTSKKT (98 aa)). The G3BP1-binding stretch occupies residues 6–21 (PQYIFGDFSPDEFNQF). Residues T24 and T99 each carry the phosphothreonine modification. Residues 123-164 (ESSSNAEAETLENDSGAGGLGQRERKKKKKRPPGYYSYLKDG) are disordered. A phosphoserine mark is found at S209, S224, and S316. The interval 303 to 326 (ESADLDPAKPESQSPPAESALSVS) is disordered. The span at 313 to 326 (ESQSPPAESALSVS) shows a compositional bias: polar residues. S332 is modified (phosphoserine; by ATM). Phosphoserine occurs at positions 361 and 366. The USP domain maps to 411-791 (RGLINKGNWC…TAYLLYYRRV (381 aa)). C420 serves as the catalytic Nucleophile. At S543 the chain carries Phosphoserine. Positions 546–588 (HEKHSVSNGPGSHLIEDEELEDTGEGSEDEWEQVGPKNKTSVT) are disordered. Residues 561–577 (EDEELEDTGEGSEDEWE) show a composition bias toward acidic residues. Phosphothreonine is present on T568. S572 carries the phosphoserine modification. H745 serves as the catalytic Proton acceptor.

It belongs to the peptidase C19 family. USP10 subfamily. As to quaternary structure, found in a deubiquitination complex with TANK, USP10 and ZC3H12A; this complex inhibits genotoxic stress- or interleukin-1-beta (IL1B)-mediated NF-kappa-B activation by promoting IKBKG or TRAF6 deubiquitination. Interacts with IKBKG; this interaction increases in response to DNA damage. Interacts with TANK; this interaction increases in response to DNA damage. Interacts with TRAF6; this interaction increases in response to DNA damage. Interacts with ZC3H12A; this interaction increases in response to DNA damage. Interacts with G3BP1 (via NTF2 domain) and G3BP2 (via NTF2 domain); inhibiting stress granule formation. Post-translationally, phosphorylated by ATM following DNA damage, leading to stabilization and translocation it to the nucleus. In terms of processing, ubiquitinated. Deubiquitinated by USP13.

It is found in the cytoplasm. It localises to the nucleus. The protein resides in the early endosome. The catalysed reaction is Thiol-dependent hydrolysis of ester, thioester, amide, peptide and isopeptide bonds formed by the C-terminal Gly of ubiquitin (a 76-residue protein attached to proteins as an intracellular targeting signal).. Specifically inhibited by spautin-1 (specific and potent autophagy inhibitor-1), a derivative of MBCQ that binds to USP10 and inhibits deubiquitinase activity. Regulated by PIK3C3/VPS34-containing complexes. Its function is as follows. Hydrolase that can remove conjugated ubiquitin from target proteins such as p53/TP53, RPS2/us5, RPS3/us3, RPS10/eS10, BECN1, SNX3 and CFTR. Acts as an essential regulator of p53/TP53 stability: in unstressed cells, specifically deubiquitinates p53/TP53 in the cytoplasm, leading to counteract MDM2 action and stabilize p53/TP53. Following DNA damage, translocates to the nucleus and deubiquitinates p53/TP53, leading to regulate the p53/TP53-dependent DNA damage response. Component of a regulatory loop that controls autophagy and p53/TP53 levels: mediates deubiquitination of BECN1, a key regulator of autophagy, leading to stabilize the PIK3C3/VPS34-containing complexes. In turn, PIK3C3/VPS34-containing complexes regulate USP10 stability, suggesting the existence of a regulatory system by which PIK3C3/VPS34-containing complexes regulate p53/TP53 protein levels via USP10 and USP13. Does not deubiquitinate MDM2. Plays a key role in 40S ribosome subunit recycling when a ribosome has stalled during translation: acts both by inhibiting formation of stress granules, which store stalled translation pre-initiation complexes, and mediating deubiquitination of 40S ribosome subunits. Acts as a negative regulator of stress granules formation by lowering G3BP1 and G3BP2 valence, thereby preventing G3BP1 and G3BP2 ability to undergo liquid-liquid phase separation (LLPS) and assembly of stress granules. Promotes 40S ribosome subunit recycling following ribosome dissociation in response to ribosome stalling by mediating deubiquitination of 40S ribosomal proteins RPS2/us5, RPS3/us3 and RPS10/eS10, thereby preventing their degradation by the proteasome. Part of a ribosome quality control that takes place when ribosomes have stalled during translation initiation (iRQC): USP10 acts by removing monoubiquitination of RPS2/us5 and RPS3/us3, promoting 40S ribosomal subunit recycling. Deubiquitinates CFTR in early endosomes, enhancing its endocytic recycling. Involved in a TANK-dependent negative feedback response to attenuate NF-kappa-B activation via deubiquitinating IKBKG or TRAF6 in response to interleukin-1-beta (IL1B) stimulation or upon DNA damage. Deubiquitinates TBX21 leading to its stabilization. Plays a negative role in the RLR signaling pathway upon RNA virus infection by blocking the RIGI-mediated MAVS activation. Mechanistically, removes the unanchored 'Lys-63'-linked polyubiquitin chains of MAVS to inhibit its aggregation, essential for its activation. The protein is Ubiquitin carboxyl-terminal hydrolase 10 (Usp10) of Rattus norvegicus (Rat).